A 729-amino-acid chain; its full sequence is Fatty acid oxidation complex subunit alpha (729 aa).

The interval M1 to D189 is enoyl-CoA hydratase/isomerase. D296 contacts substrate. The tract at residues A311–A729 is 3-hydroxyacyl-CoA dehydrogenase. Residues M324, D343, V400–E402, K407, and S429 each bind NAD(+). The active-site For 3-hydroxyacyl-CoA dehydrogenase activity is H450. N453 contacts NAD(+). 2 residues coordinate substrate: N500 and Y660.

It in the N-terminal section; belongs to the enoyl-CoA hydratase/isomerase family. This sequence in the C-terminal section; belongs to the 3-hydroxyacyl-CoA dehydrogenase family. In terms of assembly, heterotetramer of two alpha chains (FadB) and two beta chains (FadA).

It carries out the reaction a (3S)-3-hydroxyacyl-CoA + NAD(+) = a 3-oxoacyl-CoA + NADH + H(+). It catalyses the reaction a (3S)-3-hydroxyacyl-CoA = a (2E)-enoyl-CoA + H2O. The catalysed reaction is a 4-saturated-(3S)-3-hydroxyacyl-CoA = a (3E)-enoyl-CoA + H2O. The enzyme catalyses (3S)-3-hydroxybutanoyl-CoA = (3R)-3-hydroxybutanoyl-CoA. It carries out the reaction a (3Z)-enoyl-CoA = a 4-saturated (2E)-enoyl-CoA. It catalyses the reaction a (3E)-enoyl-CoA = a 4-saturated (2E)-enoyl-CoA. Its pathway is lipid metabolism; fatty acid beta-oxidation. Functionally, involved in the aerobic and anaerobic degradation of long-chain fatty acids via beta-oxidation cycle. Catalyzes the formation of 3-oxoacyl-CoA from enoyl-CoA via L-3-hydroxyacyl-CoA. It can also use D-3-hydroxyacyl-CoA and cis-3-enoyl-CoA as substrate. The chain is Fatty acid oxidation complex subunit alpha from Yersinia pseudotuberculosis serotype IB (strain PB1/+).